A 189-amino-acid chain; its full sequence is Apolipoprotein D (189 aa).

The N-terminal stretch at 1 to 20 (MVMLLLLLSALAGLFGAAEG) is a signal peptide. Glutamine 21 is modified (pyrrolidone carboxylic acid). 2 disulfide bridges follow: cysteine 28/cysteine 134 and cysteine 61/cysteine 185. Asparagine 65 and asparagine 98 each carry an N-linked (GlcNAc...) asparagine glycan.

The protein belongs to the calycin superfamily. Lipocalin family. Homodimer.

It is found in the secreted. Its function is as follows. APOD occurs in the macromolecular complex with lecithin-cholesterol acyltransferase. It is probably involved in the transport and binding of bilin. Appears to be able to transport a variety of ligands in a number of different contexts. This Macaca fascicularis (Crab-eating macaque) protein is Apolipoprotein D (APOD).